Here is a 726-residue protein sequence, read N- to C-terminus: Transferrin (726 aa).

Positions 1 to 16 (MLLCLTLLFSASAVLA) are cleaved as a signal peptide. Transferrin-like domains are found at residues 29 to 367 (YKVC…ERDT) and 374 to 719 (VRFC…VIRA). Intrachain disulfides connect cysteine 32–cysteine 63 and cysteine 41–cysteine 54. Fe(3+) contacts are provided by aspartate 78 and tyrosine 111. 4 disulfides stabilise this stretch: cysteine 135/cysteine 231, cysteine 184/cysteine 210, cysteine 207/cysteine 216, and cysteine 274/cysteine 287. Threonine 137, arginine 141, valine 143, and glycine 144 together coordinate hydrogencarbonate. Asparagine 162 is a glycosylation site (N-linked (GlcNAc...) asparagine). Tyrosine 225 contacts Fe(3+). Residues asparagine 337 and asparagine 358 are each glycosylated (N-linked (GlcNAc...) asparagine). 2 disulfides stabilise this stretch: cysteine 377-cysteine 414 and cysteine 387-cysteine 405. Residues aspartate 429 and tyrosine 457 each coordinate Fe(3+). Cysteine 481 and cysteine 562 form a disulfide bridge. Hydrogencarbonate contacts are provided by threonine 483, arginine 487, alanine 489, and glycine 490. The Fe(3+) site is built by tyrosine 573 and histidine 642.

It belongs to the transferrin family.

It localises to the secreted. Transferrins are iron binding transport proteins which bind Fe(3+) ion in association with the binding of an anion, usually bicarbonate. The chain is Transferrin from Blaberus discoidalis (Tropical cockroach).